The sequence spans 596 residues: DNA mismatch repair protein MutL (596 aa).

The protein belongs to the DNA mismatch repair MutL/HexB family.

This protein is involved in the repair of mismatches in DNA. It is required for dam-dependent methyl-directed DNA mismatch repair. May act as a 'molecular matchmaker', a protein that promotes the formation of a stable complex between two or more DNA-binding proteins in an ATP-dependent manner without itself being part of a final effector complex. This chain is DNA mismatch repair protein MutL, found in Leptospira borgpetersenii serovar Hardjo-bovis (strain L550).